The chain runs to 1166 residues: Poly [ADP-ribose] polymerase tankyrase-2 (1166 aa).

3 ANK repeats span residues 57–89, 90–122, and 123–155; these read RKST…ARDD, GGLI…ARDN, and WNYT…IRNT. Asn-203 is subject to (3S)-3-hydroxyasparagine; by HIF1AN; partial. 6 ANK repeats span residues 210–242, 243–275, 276–308, 363–398, 399–431, and 432–464; these read RKST…AKDK, GDLV…AMDL, WQFT…LLNC, THET…EKTK, EFLT…ALDN, and LGQT…IISL. Residue His-238 is modified to (3S)-3-hydroxyhistidine; by HIF1AN; partial. Asn-271 carries the (3S)-3-hydroxyasparagine; by HIF1AN; partial modification. At Asn-427 the chain carries (3S)-3-hydroxyasparagine; by HIF1AN; partial. Residue Asn-518 is modified to (3S)-3-hydroxyasparagine; by HIF1AN; partial. ANK repeat units follow at residues 525–557, 558–590, and 591–623; these read RQST…AKDK, GGLV…VADL, and WKFT…KKNR. Residues 545–553 are HIF1AN-binding; it reads LLQHGADVH. His-553 carries the (3S)-3-hydroxyhistidine; by HIF1AN; partial modification. (3S)-3-hydroxyasparagine; by HIF1AN; partial is present on Asn-586. 3 positions are modified to (3S)-3-hydroxyasparagine; by HIF1AN; partial: Asn-671, Asn-706, and Asn-739. ANK repeat units lie at residues 678–710, 711–743, and 744–776; these read RHST…AQDK, GGLI…ATDK, and WAFT…LKNQ. The segment at 819 to 839 is disordered; that stretch reads GATADALSSGPSSPSSLSAAS. Residues 822-839 are compositionally biased toward low complexity; the sequence is ADALSSGPSSPSSLSAAS. The 64-residue stretch at 873 to 936 folds into the SAM domain; the sequence is GVDFSITQFV…IKGVERLISG (64 aa). Positions 959–1164 constitute a PARP catalytic domain; it reads SPDDKEFQSV…YQIMRPEGMV (206 aa). Residues Cys-1081, His-1084, Cys-1089, and Cys-1092 each coordinate Zn(2+).

It belongs to the ARTD/PARP family. Oligomerizes and associates with TNKS. Interacts with the cytoplasmic domain of LNPEP/Otase in SLC2A4/GLUT4-vesicles. Binds to the N-terminus of Grb14 and TRF1 with its ankyrin repeat region. Interacts with HIF1AN. Interacts with RNF146; this interaction leads to ubiquitination and proteasomal degradation. Interacts with NUMA1. In terms of processing, ubiquitinated at 'Lys-48' and 'Lys-63' by RNF146 when auto-poly-ADP-ribosylated; this leads to degradation. Deubiquitinated by USP25; leading to stabilization. ADP-ribosylated (-auto). Poly-ADP-ribosylated protein is recognized by RNF146, followed by ubiquitination. Post-translationally, the crystallographic evidence suggests that the 3-hydroxyhistidine may be the (3S) stereoisomer. As to expression, highly expressed in placenta, skeletal muscle, liver, brain, kidney, heart, thymus, spinal cord, lung, peripheral blood leukocytes, pancreas, lymph nodes, spleen, prostate, testis, ovary, small intestine, colon, mammary gland, breast and breast carcinoma, and in common-type meningioma. Highly expressed in fetal liver, heart and brain.

The protein resides in the cytoplasm. It is found in the golgi apparatus membrane. It localises to the nucleus. The protein localises to the chromosome. Its subcellular location is the telomere. The enzyme catalyses NAD(+) + (ADP-D-ribosyl)n-acceptor = nicotinamide + (ADP-D-ribosyl)n+1-acceptor + H(+).. It carries out the reaction L-aspartyl-[protein] + NAD(+) = 4-O-(ADP-D-ribosyl)-L-aspartyl-[protein] + nicotinamide. It catalyses the reaction L-glutamyl-[protein] + NAD(+) = 5-O-(ADP-D-ribosyl)-L-glutamyl-[protein] + nicotinamide. Specifically inhibited by XAV939, a small molecule, leading to inhibit the Wnt signaling pathway by stabilizing AXIN1 and AXIN2. Inhibited by talazoparib. Functionally, poly-ADP-ribosyltransferase involved in various processes such as Wnt signaling pathway, telomere length and vesicle trafficking. Acts as an activator of the Wnt signaling pathway by mediating poly-ADP-ribosylation of AXIN1 and AXIN2, 2 key components of the beta-catenin destruction complex: poly-ADP-ribosylated target proteins are recognized by RNF146, which mediates their ubiquitination and subsequent degradation. Also mediates poly-ADP-ribosylation of BLZF1 and CASC3, followed by recruitment of RNF146 and subsequent ubiquitination. Mediates poly-ADP-ribosylation of TERF1, thereby contributing to the regulation of telomere length. Stimulates 26S proteasome activity. The chain is Poly [ADP-ribose] polymerase tankyrase-2 from Homo sapiens (Human).